The primary structure comprises 609 residues: Ovochymase-2 (609 aa).

Positions 1-22 (MPISKDKLILILGMVCLEQGHS) are cleaved as a signal peptide. The propeptide at 23 to 51 (ETLSSIRNPDCGQSLVKPQPQNYFSLFSR) is activation peptide. A Peptidase S1 domain is found at 52 to 299 (IVGGSQVEKG…VLPWILKHIQ (248 aa)). A disulfide bond links Cys77 and Cys93. His92 functions as the Charge relay system in the catalytic mechanism. A glycan (N-linked (GlcNAc...) asparagine) is linked at Asn104. Glu119 serves as a coordination point for Ca(2+). The active-site Charge relay system is the Asp142. 4 disulfide bridges follow: Cys176–Cys246, Cys207–Cys225, Cys236–Cys265, and Cys311–Cys341. The active-site Charge relay system is Ser240. CUB domains lie at 311-421 (CSEP…YKAL) and 431-543 (CRSL…ISFI). Residue Asn356 is glycosylated (N-linked (GlcNAc...) asparagine). A disulfide bridge connects residues Cys365 and Cys384. Asn415 is a glycosylation site (N-linked (GlcNAc...) asparagine). 2 cysteine pairs are disulfide-bonded: Cys431–Cys458 and Cys485–Cys506. N-linked (GlcNAc...) asparagine glycans are attached at residues Asn530 and Asn549. Residues 580–609 (HTKPPYEEDIGEMPAIDSGLLKQGERRGKH) form a disordered region.

It belongs to the peptidase S1 family. As to expression, only expressed in uterus tissue. Expressed in the initial segment (IS) of the caput epididymis, the region most proximal to the testis.

It localises to the secreted. May be required for sperm ADAM3 processing and consequential sperm fertilizing ability. In vitro, has an endopeptidase activity. The protein is Ovochymase-2 of Mus musculus (Mouse).